Here is a 315-residue protein sequence, read N- to C-terminus: Olfactory receptor 3A1 (315 aa).

The Extracellular portion of the chain corresponds to 1–28 (MQPESGANGTVIAEFILLGLLEAPGLQP). N8 carries an N-linked (GlcNAc...) asparagine glycan. The helical transmembrane segment at 29 to 52 (VVFVLFLFAYLVTVGGNLSILAAV) threads the bilayer. Residues 53 to 60 (LVEPKLHS) lie on the Cytoplasmic side of the membrane. Residues 61 to 82 (PMYFFLGNLSVLDVGCISVTVP) traverse the membrane as a helical segment. Topologically, residues 83 to 103 (SMLSRLLSRKRAVPCGACLTQ) are extracellular. Residues C100 and C192 are joined by a disulfide bond. The chain crosses the membrane as a helical span at residues 104-123 (LFFFHLFVGVDCFLLTAMAY). The Cytoplasmic segment spans residues 124 to 143 (DRFLAICRPLTYSTRMSQTV). The chain crosses the membrane as a helical span at residues 144–161 (QRMLVAASWACAFTNALT). Topologically, residues 162–199 (HTVAMSTLNFCGPNEVNHFYCDLPQLFQLSCSSTQLNE) are extracellular. The chain crosses the membrane as a helical span at residues 200–223 (LLLFAVGFIMAGTPMALIVISYIH). At 224-240 (VAAAVLRIRSVEGRKKA) the chain is on the cytoplasmic side. The helical transmembrane segment at 241-264 (FSTCGSHLTVVAMFYGSGIFNYMR) threads the bilayer. The Extracellular segment spans residues 265–275 (LGSTKLSDKDK). A helical transmembrane segment spans residues 276–295 (AVGIFNTVINPMVNPIIYRF). Residues 296 to 315 (RNPEVQSAIWRMLTGRRSLA) are Cytoplasmic-facing.

It belongs to the G-protein coupled receptor 1 family.

The protein resides in the cell membrane. Its function is as follows. Odorant receptor. The polypeptide is Olfactory receptor 3A1 (OR3A1) (Pan troglodytes (Chimpanzee)).